The chain runs to 120 residues: Large ribosomal subunit protein uL18 (120 aa).

The protein belongs to the universal ribosomal protein uL18 family. Part of the 50S ribosomal subunit. Part of the 5S rRNA/L5/L18/L25 subcomplex. Contacts the 23S rRNA and 5S rRNA. Required for catalysis of RNase M5.

Its function is as follows. This is one of the proteins that bind and probably mediate the attachment of the 5S RNA into the large ribosomal subunit, where it forms part of the central protuberance. Functionally, required for correct processing of both the 5' and 3' ends of 5S rRNA precursor, which is does in conjunction with ribonuclease M5 (RNase M5, rnmV). Possibly folds the 5S rRNA precursor into the correct conformation, thus acting as a chaperone. This Bacillus subtilis (strain 168) protein is Large ribosomal subunit protein uL18.